Consider the following 277-residue polypeptide: Large ribosomal subunit protein uL2 (277 aa).

The interval 225–277 (MNPVDHPHGGGEGKTSGGRNSVTPWGVPTKGKKTRKRGKHSDKYIKVSSVRKR) is disordered. Residues 254–264 (KGKKTRKRGKH) show a composition bias toward basic residues.

Belongs to the universal ribosomal protein uL2 family. Part of the 50S ribosomal subunit. Forms a bridge to the 30S subunit in the 70S ribosome.

One of the primary rRNA binding proteins. Required for association of the 30S and 50S subunits to form the 70S ribosome, for tRNA binding and peptide bond formation. It has been suggested to have peptidyltransferase activity; this is somewhat controversial. Makes several contacts with the 16S rRNA in the 70S ribosome. The protein is Large ribosomal subunit protein uL2 of Anaplasma marginale (strain Florida).